The primary structure comprises 525 residues: Bifunctional purine biosynthesis protein PurH (525 aa).

The MGS-like domain maps to 1–149 (MSDPVIKRAL…KNNESVTVVT (149 aa)).

Belongs to the PurH family.

The enzyme catalyses (6R)-10-formyltetrahydrofolate + 5-amino-1-(5-phospho-beta-D-ribosyl)imidazole-4-carboxamide = 5-formamido-1-(5-phospho-D-ribosyl)imidazole-4-carboxamide + (6S)-5,6,7,8-tetrahydrofolate. It catalyses the reaction IMP + H2O = 5-formamido-1-(5-phospho-D-ribosyl)imidazole-4-carboxamide. Its pathway is purine metabolism; IMP biosynthesis via de novo pathway; 5-formamido-1-(5-phospho-D-ribosyl)imidazole-4-carboxamide from 5-amino-1-(5-phospho-D-ribosyl)imidazole-4-carboxamide (10-formyl THF route): step 1/1. It participates in purine metabolism; IMP biosynthesis via de novo pathway; IMP from 5-formamido-1-(5-phospho-D-ribosyl)imidazole-4-carboxamide: step 1/1. The polypeptide is Bifunctional purine biosynthesis protein PurH (Pelodictyon phaeoclathratiforme (strain DSM 5477 / BU-1)).